We begin with the raw amino-acid sequence, 75 residues long: Exodeoxyribonuclease 7 small subunit (75 aa).

It belongs to the XseB family. In terms of assembly, heterooligomer composed of large and small subunits.

It is found in the cytoplasm. The catalysed reaction is Exonucleolytic cleavage in either 5'- to 3'- or 3'- to 5'-direction to yield nucleoside 5'-phosphates.. Its function is as follows. Bidirectionally degrades single-stranded DNA into large acid-insoluble oligonucleotides, which are then degraded further into small acid-soluble oligonucleotides. The chain is Exodeoxyribonuclease 7 small subunit from Listeria welshimeri serovar 6b (strain ATCC 35897 / DSM 20650 / CCUG 15529 / CIP 8149 / NCTC 11857 / SLCC 5334 / V8).